We begin with the raw amino-acid sequence, 358 residues long: MAQEVDTAQGAEMRRGAGAARGRASWCWALALLWLAVVPGWSRVSGIPSRRHWPVPYKRFDFRPKPDPYCQAKYTFCPTGSPIPVMEGDDDIEVFRLQAPVWEFKYGDLLGHLKIMHDAIGFRSTLTGKNYTMEWYELFQLGNCTFPHLRPEMDAPFWCNQGAACFFEGIDDVHWKENGTLVQVATISGNMFNQMAKWVKQDNETGIYYETWNVKASPEKGAETWFDSYDCSKFVLRTFNKLAEFGAEFKNIETNYTRIFLYSGEPTYLGNETSVFGPTGNKTLGLAIKRFYYPFKPHLPTKEFLLSLLQIFDAVIVHKQFYLFYNFEYWFLPMKFPFIKITYEEIPLPIRNKTLSGL.

Residues Met1–Arg23 lie on the Cytoplasmic side of the membrane. The chain crosses the membrane as a helical; Signal-anchor for type II membrane protein span at residues Ala24 to Gly40. Residues Trp41–Leu358 lie on the Lumenal side of the membrane. 2 disulfide bridges follow: Cys70/Cys159 and Cys77/Cys165. His117 (proton acceptor) is an active-site residue. N-linked (GlcNAc...) asparagine glycans are attached at residues Asn130, Asn143, Asn178, and Asn203. Residue Cys231 is the Nucleophile; Acyl-thioester intermediate of the active site. N-linked (GlcNAc...) asparagine glycosylation is found at Asn255, Asn271, and Asn281. Residues Phe304 to Tyr343 are membrane-anchoring. N-linked (GlcNAc...) asparagine glycosylation is present at Asn352.

This sequence belongs to the CLN5 family. In terms of assembly, multimer. Interacts with SORT1, RAB5A and RAB7A. Interacts with PPT1, TPP1, CLN3, CLN6, CLN8, ATP5F1A and ATP5F1B. In terms of processing, N-glycosylated with both high mannose and complex type sugars. Glycosylation is important for proper folding and trafficking to the lysosomes. The type II membrane signal anchor is proteolytically cleaved to produce a mature form that is transported to the lysosomes (Bis(monoacylglycero)phosphate synthase CLN5, secreted form). Post-translationally, can undergo proteolytic cleavage at the C-terminus, probably by a cysteine protease and may involve the removal of approximately 10-15 residues from the C-terminal end. As to expression, ubiquitous.

The protein localises to the lysosome. The protein resides in the membrane. The catalysed reaction is S-hexadecanoyl-L-cysteinyl-[protein] + H2O = L-cysteinyl-[protein] + hexadecanoate + H(+). It carries out the reaction 2 1-acyl-sn-glycero-3-phospho-(1'-sn-glycerol) = 1-acyl-sn-glycero-3-phospho-(3'-acyl-sn-1'-glycerol) + sn-glycero-3-phospho-(1'-sn-glycerol). It catalyses the reaction 2 1-(9Z-octadecenoyl)-sn-glycero-3-phospho-(1'-sn-glycerol) = 1-(9Z-octadecenoyl)-sn-glycero-3-phospho-(3'-(9Z-octadecenoyl)-1'-sn-glycerol) + sn-glycero-3-phospho-(1'-sn-glycerol). The enzyme catalyses 2 1-octadecanoyl-sn-glycero-3-phospho-(1'-sn-glycerol) = 1-octadecanoyl-sn-glycero-3-phospho-(3'-octadecanoyl-1'-sn-glycerol) + sn-glycero-3-phospho-(1'-sn-glycerol). The catalysed reaction is 2 1-hexadecanoyl-sn-glycero-3-phospho-(1'-sn-glycerol) = 1-hexadecanoyl-sn-glycero-3-phospho-(3'-hexadecanoyl-1'-sn-glycerol) + sn-glycero-3-phospho-(1'-sn-glycerol). It carries out the reaction 2 1-tetradecanoyl-sn-glycero-3-phospho-(1'-sn-glycerol) = 1-tetradecanoyl-sn-glycero-3-phospho-(3'-tetradecanoyl-1'-sn-glycerol) + sn-glycero-3-phospho-(1'-sn-glycerol). With respect to regulation, anionic phospholipids activate bis(monoacylglycero)phosphate (BMP) synthase activity. Amiodarone, a cationic amphiphilic drug inhibits BMP synthase activity towards liposomal lysophosphatidylglycerol. Palmostatin B inhibits palmitoyl protein thioesterase activity. Catalyzes the synthesis of bis(monoacylglycero)phosphate (BMP) via transacylation of 2 molecules of lysophosphatidylglycerol (LPG). BMP also known as lysobisphosphatidic acid plays a key role in the formation of intraluminal vesicles and in maintaining intracellular cholesterol homeostasis. Can use only LPG as the exclusive lysophospholipid acyl donor for base exchange and displays BMP synthase activity towards various LPGs (LPG 14:0, LPG 16:0, LPG 18:0, LPG 18:1) with a higher preference for longer chain lengths. Plays a role in influencing the retrograde trafficking of lysosomal sorting receptors SORT1 and IGF2R from the endosomes to the trans-Golgi network by controlling the recruitment of retromer complex to the endosomal membrane. Regulates the localization and activation of RAB7A which is required to recruit the retromer complex to the endosomal membrane. In terms of biological role, exhibits palmitoyl protein thioesterase (S-depalmitoylation) activity in vitro and most likely plays a role in protein S-depalmitoylation. The protein is Bis(monoacylglycero)phosphate synthase CLN5 (CLN5) of Homo sapiens (Human).